Here is a 568-residue protein sequence, read N- to C-terminus: Dual specificity tyrosine-phosphorylation-regulated kinase 3 (568 aa).

Residues 1-168 (MKWKEKLGDG…HGVIGGPNNG (168 aa)) are disordered. Residues 77-114 (SNTVQSDGISDSEKCSPTVSQGKSSDCLNTVKSNSSSK) are compositionally biased toward polar residues. The region spanning 189 to 502 (YEVLKIIGKG…PAQALRHPWI (314 aa)) is the Protein kinase domain. ATP-binding positions include 195 to 203 (IGKGSFGQV) and K218. D315 acts as the Proton acceptor in catalysis. Position 330 is a phosphoserine (S330). Phosphotyrosine is present on Y349. Positions 448–461 (RSRRGKKRGPPGSK) match the Nuclear localization signal motif.

The protein belongs to the protein kinase superfamily. CMGC Ser/Thr protein kinase family. MNB/DYRK subfamily. In terms of assembly, interacts with SIRT1. The cofactor is Mg(2+). Post-translationally, protein kinase activity is activated following autophosphorylation at Tyr-349. Autophosphorylation at Ser-330 stabilizes the protein and enhances the protein kinase activity. Ubiquitinated at anaphase by the anaphase-promoting complex (APC/C), leading to its degradation by the proteasome.

It is found in the nucleus. The protein resides in the cytoplasm. It localises to the nucleus speckle. The protein localises to the cytoplasmic granule. Its subcellular location is the cytoskeleton. It is found in the microtubule organizing center. The protein resides in the centrosome. It catalyses the reaction L-seryl-[protein] + ATP = O-phospho-L-seryl-[protein] + ADP + H(+). The enzyme catalyses L-threonyl-[protein] + ATP = O-phospho-L-threonyl-[protein] + ADP + H(+). The catalysed reaction is L-tyrosyl-[protein] + ATP = O-phospho-L-tyrosyl-[protein] + ADP + H(+). Its activity is regulated as follows. Protein kinase activity is activated following autophosphorylation at Tyr-349. In terms of biological role, dual-specificity protein kinase that promotes disassembly of several types of membraneless organelles during mitosis, such as stress granules, nuclear speckles and pericentriolar material. Dual-specificity tyrosine-regulated kinases (DYRKs) autophosphorylate a critical tyrosine residue in their activation loop and phosphorylate their substrate on serine and threonine residues. Acts as a central dissolvase of membraneless organelles during the G2-to-M transition, after the nuclear-envelope breakdown: acts by mediating phosphorylation of multiple serine and threonine residues in unstructured domains of proteins, such as SRRM1 and PCM1. Does not mediate disassembly of all membraneless organelles: disassembly of P-body and nucleolus is not regulated by DYRK3. Dissolution of membraneless organelles at the onset of mitosis is also required to release mitotic regulators, such as ZNF207, from liquid-unmixed organelles where they are sequestered and keep them dissolved during mitosis. Regulates mTORC1 by mediating the dissolution of stress granules: during stressful conditions, DYRK3 partitions from the cytosol to the stress granule, together with mTORC1 components, which prevents mTORC1 signaling. When stress signals are gone, the kinase activity of DYRK3 is required for the dissolution of stress granule and mTORC1 relocation to the cytosol: acts by mediating the phosphorylation of the mTORC1 inhibitor AKT1S1, allowing full reactivation of mTORC1 signaling. Also acts as a negative regulator of EPO-dependent erythropoiesis: may place an upper limit on red cell production during stress erythropoiesis. Inhibits cell death due to cytokine withdrawal in hematopoietic progenitor cells. Promotes cell survival upon genotoxic stress through phosphorylation of SIRT1: this in turn inhibits p53/TP53 activity and apoptosis. The sequence is that of Dual specificity tyrosine-phosphorylation-regulated kinase 3 from Macaca fascicularis (Crab-eating macaque).